The sequence spans 308 residues: Transcriptional adapter 1-2 (308 aa).

It belongs to the TADA1 family. Component of the Spt-Ada-Gcn5 acetyltransferase (SAGA) complex consisting of wda/Taf5L, Saf6, Taf9, Taf10b, Taf12, Ada1, Spt3, Spt7, Spt20, Sf3b3, Sf3b5, Nipped-A/Tra1, a histone acetyltransferase (HAT) module made up of Gcn5, Ada2b (Isoform B), Ada3 and Sgf29, and a deubiquitinase (DUB) module made up of not/nonstop, Sgf11 and e(y)2 tethered to SAGA by Atxn7. Not a component of the Ada2a-containing ATAC complex.

Its subcellular location is the nucleus. Its function is as follows. Component of the transcription regulatory complex SAGA, a multiprotein complex that activates transcription by remodeling chromatin and mediating histone acetylation and deubiquitination. The SAGA complex predominantly acetylates histone H3. The polypeptide is Transcriptional adapter 1-2 (Drosophila melanogaster (Fruit fly)).